Reading from the N-terminus, the 232-residue chain is Protein lin-7 homolog A (232 aa).

The Kinase interacting site signature appears at methionine 14 to aspartate 28. An L27 domain is found at leucine 25–glycine 80. The region spanning valine 108–proline 190 is the PDZ domain.

This sequence belongs to the lin-7 family. In terms of assembly, forms a complex with CASK and CASKIN1. Component of the brain-specific heterotrimeric complex (LIN-10-LIN-2-LIN-7 complex) composed of at least APBA1, CASK, and LIN7, which associates with the motor protein KIF17 to transport vesicles along microtubules. Can also interact with other modular proteins containing protein-protein interaction domains like PALS1, PALS2, MPP7, DLG1, DLG2 and DLG3 through its L27 domain. Interacts with DLG4 and GRIN2B as well as CDH1 and CTNNB1, the channels KCNJ12/Kir2.2, KCNJ4/Kir2.3 and probably KCNJ2/Kir2.1 and SLC6A12/BGT-1 via its PDZ domain. The association of LIN7A with cadherin and beta-catenin is calcium-dependent, occurs at synaptic junctions and requires the actin cytoskeleton. Interacts with EGFR, ERBB2, ERBB3 and ERBB4 with both PDZ and KID domains. Associates with KIF17 via APBA1. Interacts with HTR4. Forms a tripartite complex composed of DLG1, MPP7 and LIN7 (LIN7A or LIN7C). Interacts with MARCHF11. In terms of tissue distribution, ubiquitously expressed in brain and detected in lung, liver and testis (at protein level). Expression was detected only in brain.

The protein localises to the cell membrane. It is found in the basolateral cell membrane. Its subcellular location is the cell junction. It localises to the postsynaptic density membrane. The protein resides in the tight junction. Its function is as follows. Plays a role in establishing and maintaining the asymmetric distribution of channels and receptors at the plasma membrane of polarized cells. Forms membrane-associated multiprotein complexes that may regulate delivery and recycling of proteins to the correct membrane domains. The tripartite complex composed of LIN7 (LIN7A, LIN7B or LIN7C), CASK and APBA1 associates with the motor protein KIF17 to transport vesicles containing N-methyl-D-aspartate (NMDA) receptor subunit NR2B along microtubules. This complex may have the potential to couple synaptic vesicle exocytosis to cell adhesion in brain. Ensures the proper localization of GRIN2B (subunit 2B of the NMDA receptor) to neuronal postsynaptic density and may function in localizing synaptic vesicles at synapses where it is recruited by beta-catenin and cadherin. Required to localize Kir2 channels, GABA transporter (SLC6A12) and EGFR/ERBB1, ERBB2, ERBB3 and ERBB4 to the basolateral membrane of epithelial cells. This Rattus norvegicus (Rat) protein is Protein lin-7 homolog A (Lin7a).